The chain runs to 424 residues: UPF0597 protein Shewana3_2972 (424 aa).

It belongs to the UPF0597 family.

This Shewanella sp. (strain ANA-3) protein is UPF0597 protein Shewana3_2972.